The primary structure comprises 701 residues: Elongation factor G (701 aa).

In terms of domain architecture, tr-type G spans 10 to 290 (AKVRNIGIMA…AVVDYLPSPL (281 aa)). GTP is bound by residues 19 to 26 (AHIDAGKT), 83 to 87 (DTPGH), and 137 to 140 (NKMD).

It belongs to the TRAFAC class translation factor GTPase superfamily. Classic translation factor GTPase family. EF-G/EF-2 subfamily.

The protein localises to the cytoplasm. Its function is as follows. Catalyzes the GTP-dependent ribosomal translocation step during translation elongation. During this step, the ribosome changes from the pre-translocational (PRE) to the post-translocational (POST) state as the newly formed A-site-bound peptidyl-tRNA and P-site-bound deacylated tRNA move to the P and E sites, respectively. Catalyzes the coordinated movement of the two tRNA molecules, the mRNA and conformational changes in the ribosome. The chain is Elongation factor G from Tropheryma whipplei (strain Twist) (Whipple's bacillus).